The following is a 340-amino-acid chain: 4-hydroxythreonine-4-phosphate dehydrogenase (340 aa).

Thr135 is a substrate binding site. A divalent metal cation-binding residues include His170, His215, and His276. Substrate contacts are provided by Lys284, Asn293, and Arg302.

Belongs to the PdxA family. In terms of assembly, homodimer. A divalent metal cation is required as a cofactor.

It is found in the cytoplasm. The catalysed reaction is 4-(phosphooxy)-L-threonine + NAD(+) = 3-amino-2-oxopropyl phosphate + CO2 + NADH. It participates in cofactor biosynthesis; pyridoxine 5'-phosphate biosynthesis; pyridoxine 5'-phosphate from D-erythrose 4-phosphate: step 4/5. Its function is as follows. Catalyzes the NAD(P)-dependent oxidation of 4-(phosphooxy)-L-threonine (HTP) into 2-amino-3-oxo-4-(phosphooxy)butyric acid which spontaneously decarboxylates to form 3-amino-2-oxopropyl phosphate (AHAP). The chain is 4-hydroxythreonine-4-phosphate dehydrogenase from Synechococcus sp. (strain JA-2-3B'a(2-13)) (Cyanobacteria bacterium Yellowstone B-Prime).